The following is a 516-amino-acid chain: GMP synthase [glutamine-hydrolyzing] (516 aa).

The 193-residue stretch at 7–199 (KIIILDFGSQ…VFGLCKCQAT (193 aa)) folds into the Glutamine amidotransferase type-1 domain. The active-site Nucleophile is the C84. Catalysis depends on residues H173 and E175. In terms of domain architecture, GMPS ATP-PPase spans 200-391 (WTMQGFIESN…LGLPDEAVHR (192 aa)). 227–233 (SGGVDSS) is a binding site for ATP.

Homodimer.

The catalysed reaction is XMP + L-glutamine + ATP + H2O = GMP + L-glutamate + AMP + diphosphate + 2 H(+). Its pathway is purine metabolism; GMP biosynthesis; GMP from XMP (L-Gln route): step 1/1. Catalyzes the synthesis of GMP from XMP. The chain is GMP synthase [glutamine-hydrolyzing] from Desulfotalea psychrophila (strain LSv54 / DSM 12343).